We begin with the raw amino-acid sequence, 449 residues long: Sensor protein QseC (449 aa).

Residues 1-12 (MKFTQRLSLRVR) are Cytoplasmic-facing. Residues 13-33 (LTLIFLILASVTWLLSSFVAW) traverse the membrane as a helical segment. Residues 34–156 (KQTTDNVDEL…QEWEYREDMA (123 aa)) lie on the Periplasmic side of the membrane. Residues 157-177 (LAIVAGQLIPWLVALPVMLII) form a helical membrane-spanning segment. Residues 178-449 (MMVLLGRELA…QGGFEAKVSW (272 aa)) are Cytoplasmic-facing. Residues 243–449 (DAAHELRSPL…QGGFEAKVSW (207 aa)) enclose the Histidine kinase domain. His246 bears the Phosphohistidine; by autocatalysis mark.

It is found in the cell inner membrane. It carries out the reaction ATP + protein L-histidine = ADP + protein N-phospho-L-histidine.. Functionally, member of a two-component regulatory system QseB/QseC. Activates the flagella regulon by activating transcription of FlhDC. May activate QseB by phosphorylation. The sequence is that of Sensor protein QseC (qseC) from Escherichia coli O157:H7.